The chain runs to 330 residues: Phosphate acyltransferase (330 aa).

It belongs to the PlsX family. Homodimer. Probably interacts with PlsY.

It localises to the cytoplasm. It catalyses the reaction a fatty acyl-[ACP] + phosphate = an acyl phosphate + holo-[ACP]. The protein operates within lipid metabolism; phospholipid metabolism. Functionally, catalyzes the reversible formation of acyl-phosphate (acyl-PO(4)) from acyl-[acyl-carrier-protein] (acyl-ACP). This enzyme utilizes acyl-ACP as fatty acyl donor, but not acyl-CoA. The protein is Phosphate acyltransferase of Streptococcus pneumoniae (strain ATCC 700669 / Spain 23F-1).